The primary structure comprises 126 residues: Aspartate 1-decarboxylase (126 aa).

The Schiff-base intermediate with substrate; via pyruvic acid role is filled by serine 25. At serine 25 the chain carries Pyruvic acid (Ser). Residue threonine 57 coordinates substrate. The active-site Proton donor is the tyrosine 58. Position 73–75 (73–75) interacts with substrate; the sequence is GAA.

Belongs to the PanD family. In terms of assembly, heterooctamer of four alpha and four beta subunits. Pyruvate is required as a cofactor. Is synthesized initially as an inactive proenzyme, which is activated by self-cleavage at a specific serine bond to produce a beta-subunit with a hydroxyl group at its C-terminus and an alpha-subunit with a pyruvoyl group at its N-terminus.

Its subcellular location is the cytoplasm. It catalyses the reaction L-aspartate + H(+) = beta-alanine + CO2. It functions in the pathway cofactor biosynthesis; (R)-pantothenate biosynthesis; beta-alanine from L-aspartate: step 1/1. In terms of biological role, catalyzes the pyruvoyl-dependent decarboxylation of aspartate to produce beta-alanine. The polypeptide is Aspartate 1-decarboxylase (Yersinia pseudotuberculosis serotype IB (strain PB1/+)).